The sequence spans 258 residues: Kallikrein-1 (258 aa).

The N-terminal stretch at 1 to 18 (MWFLVLCLALSLGGTGAA) is a signal peptide. The propeptide at 19–24 (PPIQSR) is activation peptide. The 231-residue stretch at 25–255 (IVGGWECSQP…YVKWIEDTIA (231 aa)) folds into the Peptidase S1 domain. Intrachain disulfides connect cysteine 31–cysteine 170, cysteine 47–cysteine 63, cysteine 149–cysteine 216, cysteine 181–cysteine 195, and cysteine 206–cysteine 231. Histidine 62 (charge relay system) is an active-site residue. The O-linked (GalNAc...) serine glycan is linked to serine 90. Asparagine 99 carries N-linked (GlcNAc...) asparagine glycosylation. Serine 101 carries O-linked (GalNAc...) serine glycosylation. A glycan (N-linked (GlcNAc...) asparagine) is linked at asparagine 105. The active-site Charge relay system is the aspartate 117. Asparagine 161 carries N-linked (GlcNAc...) asparagine glycosylation. Serine 163 is a glycosylation site (O-linked (GalNAc...) serine). The active-site Charge relay system is serine 210.

It belongs to the peptidase S1 family. Kallikrein subfamily.

The enzyme catalyses Preferential cleavage of Arg-|-Xaa bonds in small molecule substrates. Highly selective action to release kallidin (lysyl-bradykinin) from kininogen involves hydrolysis of Met-|-Xaa or Leu-|-Xaa.. Functionally, glandular kallikreins cleave Met-Lys and Arg-Ser bonds in kininogen to release Lys-bradykinin. The chain is Kallikrein-1 (KLK1) from Papio hamadryas (Hamadryas baboon).